The chain runs to 205 residues: MEFLWAPLLGLCCSLAAADRHTVFWNSSEPKFWNEDYTVHVRLNDYLDIICPHYEDDSVAEAAMERYTLYLVEREQYQLCQPQSKDQVRWQCNQPNARHGPEKLSEKFQRFTPFTLGKEFKEGHSYYYISKPIHHQEDQCLKLKVTVSGKITHSPQAHANPQEKRLPADDPEVQVLHSIGHSAAPRLSPLAWAVLLLPFLLLQTS.

Residues 1-18 (MEFLWAPLLGLCCSLAAA) form the signal peptide. The Ephrin RBD domain maps to 19-151 (DRHTVFWNSS…KLKVTVSGKI (133 aa)). Residue N26 is glycosylated (N-linked (GlcNAc...) asparagine). Disulfide bonds link C51–C92 and C80–C140. The GPI-anchor amidated serine moiety is linked to residue S182. The propeptide at 183 to 205 (AAPRLSPLAWAVLLLPFLLLQTS) is removed in mature form.

This sequence belongs to the ephrin family. Monomer. Homodimer. Forms heterodimers with EPHA2. Binds to the receptor tyrosine kinases EPHA2, EPHA3, EPHA4, EPHA5, EPHA6 and EPHA7. Also binds with low affinity to EPHA1. Post-translationally, undergoes proteolysis by a metalloprotease to give rise to a soluble monomeric form. In terms of processing, N-Glycosylation is required for binding to EPHA2 receptor and inducing its internalization.

It is found in the cell membrane. The protein resides in the secreted. Its function is as follows. Cell surface GPI-bound ligand for Eph receptors, a family of receptor tyrosine kinases which are crucial for migration, repulsion and adhesion during neuronal, vascular and epithelial development. Binds promiscuously Eph receptors residing on adjacent cells, leading to contact-dependent bidirectional signaling into neighboring cells. Plays an important role in angiogenesis and tumor neovascularization. The recruitment of VAV2, VAV3 and PI3-kinase p85 subunit by phosphorylated EPHA2 is critical for EFNA1-induced RAC1 GTPase activation and vascular endothelial cell migration and assembly. Exerts anti-oncogenic effects in tumor cells through activation and down-regulation of EPHA2. Activates EPHA2 by inducing tyrosine phosphorylation which leads to its internalization and degradation. Acts as a negative regulator in the tumorigenesis of gliomas by down-regulating EPHA2 and FAK. Can evoke collapse of embryonic neuronal growth cone and regulates dendritic spine morphogenesis. This chain is Ephrin-A1 (EFNA1), found in Sus scrofa (Pig).